The primary structure comprises 254 residues: MKTILRPFTLLSRSIFLALFVLFLWSPDAHAMHIMEGFLPPSWSLFWWVLTLPFLVVGFRSLRKIVDANPRMKLLLAMAGAFAFVLSSLKIPSVTGSCSHPTGVGLGAVLFGPSVMSVLGVIVLLFQALLLAHGGLTTLGANAFSMAIAGPFVSYGIYRLMVMSKAPEWLAVFLAAAIGDLMTYVVTSLQLALAFPSVTGGIAASLGKFMTIFALTQVPLAISEGILTVMVFSAIREYASELFPASGTLAKEGV.

A signal peptide spans 1 to 31 (MKTILRPFTLLSRSIFLALFVLFLWSPDAHA). A run of 6 helical transmembrane segments spans residues 37 to 57 (GFLP…FLVV), 74 to 94 (LLLA…IPSV), 106 to 126 (LGAV…VLLF), 128 to 148 (ALLL…SMAI), 169 to 189 (WLAV…VTSL), and 212 to 232 (IFAL…VMVF).

The protein belongs to the CbiM family. Forms an energy-coupling factor (ECF) transporter complex composed of an ATP-binding protein (A component, CbiO), a transmembrane protein (T component, CbiQ) and 2 possible substrate-capture proteins (S components, CbiM and CbiN) of unknown stoichimetry.

It is found in the cell inner membrane. It participates in cofactor biosynthesis; adenosylcobalamin biosynthesis. Functionally, part of the energy-coupling factor (ECF) transporter complex CbiMNOQ involved in cobalt import. The chain is Cobalt transport protein CbiM from Chlorobium limicola (strain DSM 245 / NBRC 103803 / 6330).